Reading from the N-terminus, the 436-residue chain is DEAD-box ATP-dependent RNA helicase CshB (436 aa).

A Q motif motif is present at residues 4–32 (QTFTQYDFKPFLIDAVRELRFTEPTGIQQ). Residues 35–209 (FPVVKKGVSV…KKYMENPEHI (175 aa)) form the Helicase ATP-binding domain. 48 to 55 (SQTGSGKT) serves as a coordination point for ATP. The short motif at 157–160 (DEAD) is the DEAD box element. The region spanning 240-388 (MLLQFKPYLA…WADLGERRRR (149 aa)) is the Helicase C-terminal domain. The tract at residues 385–436 (RRRRKSRKKPNDELDVMATKVIKKPKKVKPNYKRKLATERDKVKRKYSNKKR) is disordered. 2 stretches are compositionally biased toward basic residues: residues 405–419 (VIKK…YKRK) and 427–436 (VKRKYSNKKR).

It belongs to the DEAD box helicase family. CshB subfamily.

The protein resides in the cytoplasm. It carries out the reaction ATP + H2O = ADP + phosphate + H(+). Probable DEAD-box RNA helicase. May work in conjunction with the cold shock proteins to ensure proper initiation of transcription at low and optimal temperatures. Unwinds dsRNA in both 5'- and 3'-directions and shows RNA-dependent ATPase activity. Probably has a somewhat redundant function with CshA, as cshA can partially complement the growth effects of a cshB deletion. The protein is DEAD-box ATP-dependent RNA helicase CshB of Bacillus cereus (strain ATCC 14579 / DSM 31 / CCUG 7414 / JCM 2152 / NBRC 15305 / NCIMB 9373 / NCTC 2599 / NRRL B-3711).